The sequence spans 199 residues: Carbon disulfide hydrolase (199 aa).

Zn(2+)-binding residues include Cys36, His91, and Cys94.

This sequence belongs to the beta-class carbonic anhydrase family. In terms of assembly, exists as both octamers and hexadecamers in solution. The hexadecameric homooligomer may form a catenane, through interactions of two interlocked octameric rings. Zn(2+) is required as a cofactor.

The enzyme catalyses carbon disulfide + 2 H2O = 2 hydrogen sulfide + CO2 + 2 H(+). It functions in the pathway sulfur metabolism; hydrogen sulfide biosynthesis. In terms of biological role, catalyzes the conversion of carbon disulfide into hydrogen sulfide and carbon dioxide, with carbonyl sulfide as an intermediate. Likely plays a key role in sulfur metabolism that allows A.thiooxidans G8 to grow on carbon disulfide as the main carbon and energy source. Does not show carbonic anhydrase activity (hydration of CO(2) to carbonate). The sequence is that of Carbon disulfide hydrolase from Acidithiobacillus thiooxidans (Thiobacillus thiooxidans).